Consider the following 149-residue polypeptide: Calmodulin (149 aa).

4 consecutive EF-hand domains span residues 8 to 43 (EQIS…LGQN), 44 to 79 (PTEA…KMQD), 81 to 116 (DSEE…LGEK), and 117 to 149 (LTDE…MMSK). 14 residues coordinate Ca(2+): D21, D23, D25, T27, E32, D57, D59, S61, T63, E68, D94, D96, N98, and E105. K116 is modified (N6,N6,N6-trimethyllysine). Residues D130, D132, D134, Q136, and E141 each contribute to the Ca(2+) site.

Belongs to the calmodulin family.

In terms of biological role, calmodulin mediates the control of a large number of enzymes, ion channels and other proteins by Ca(2+). Among the enzymes to be stimulated by the calmodulin-Ca(2+) complex are a number of protein kinases and phosphatases. The chain is Calmodulin from Trypanosoma brucei brucei.